We begin with the raw amino-acid sequence, 295 residues long: tRNA dimethylallyltransferase (295 aa).

G11–S18 contributes to the ATP binding site. Residue T13–S18 participates in substrate binding. Interaction with substrate tRNA stretches follow at residues D36–Q39 and Q158–R162.

This sequence belongs to the IPP transferase family. In terms of assembly, monomer. The cofactor is Mg(2+).

It catalyses the reaction adenosine(37) in tRNA + dimethylallyl diphosphate = N(6)-dimethylallyladenosine(37) in tRNA + diphosphate. Functionally, catalyzes the transfer of a dimethylallyl group onto the adenine at position 37 in tRNAs that read codons beginning with uridine, leading to the formation of N6-(dimethylallyl)adenosine (i(6)A). This chain is tRNA dimethylallyltransferase, found in Bartonella quintana (strain Toulouse) (Rochalimaea quintana).